A 211-amino-acid chain; its full sequence is MPLIGDKFPEMEVQTTHGLMKLPAEFKGRWFILFSHPADFTPVCTTEFVAFQEVYPELRELDCELVGLSVDQVFSHIKWIEWIEENLDTEIEFPVIADTGRVADTLGLIHPARPTNTVRAVFVVDPEGIIRAILYYPQELGRNIPEIVRMIRAFRVIDAEGVAAPANWPDNQLIGDHVIVPPASDIETARKRKEEYECYDWWLCHRSASGD.

The 155-residue stretch at 2–156 folds into the Thioredoxin domain; it reads PLIGDKFPEM…IVRMIRAFRV (155 aa). Catalysis depends on Cys44, which acts as the Cysteine sulfenic acid (-SOH) intermediate. A substrate-binding site is contributed by Arg119. An intrachain disulfide couples Cys198 to Cys204.

It belongs to the peroxiredoxin family. Prx6 subfamily. In terms of assembly, homodecamer. Pentamer of dimers that assemble into a ring structure.

Its subcellular location is the cytoplasm. It catalyses the reaction a hydroperoxide + [thioredoxin]-dithiol = an alcohol + [thioredoxin]-disulfide + H2O. In terms of biological role, thiol-specific peroxidase that catalyzes the reduction of hydrogen peroxide and organic hydroperoxides to water and alcohols, respectively. Plays a role in cell protection against oxidative stress by detoxifying peroxides. This chain is Peroxiredoxin, found in Methanothermobacter marburgensis (strain ATCC BAA-927 / DSM 2133 / JCM 14651 / NBRC 100331 / OCM 82 / Marburg) (Methanobacterium thermoautotrophicum).